The primary structure comprises 21 residues: Pedibin (21 aa).

A disordered region spans residues 1 to 21 (AGEDVSHELEEKEKALANHSE).

Functionally, morphogenetically active peptide. Active in foot development. The sequence is that of Pedibin from Hydra vulgaris (Hydra).